Here is a 53-residue protein sequence, read N- to C-terminus: ATP synthase protein 8 (53 aa).

The helical transmembrane segment at 4-24 (MAPISWLLLFIIFSITFILFC) threads the bilayer.

It belongs to the ATPase protein 8 family. As to quaternary structure, F-type ATPases have 2 components, CF(1) - the catalytic core - and CF(0) - the membrane proton channel.

It localises to the mitochondrion membrane. Mitochondrial membrane ATP synthase (F(1)F(0) ATP synthase or Complex V) produces ATP from ADP in the presence of a proton gradient across the membrane which is generated by electron transport complexes of the respiratory chain. F-type ATPases consist of two structural domains, F(1) - containing the extramembraneous catalytic core and F(0) - containing the membrane proton channel, linked together by a central stalk and a peripheral stalk. During catalysis, ATP synthesis in the catalytic domain of F(1) is coupled via a rotary mechanism of the central stalk subunits to proton translocation. Part of the complex F(0) domain. Minor subunit located with subunit a in the membrane. This is ATP synthase protein 8 (mt:ATPase8) from Drosophila sechellia (Fruit fly).